The primary structure comprises 494 residues: UPF0371 protein SPT_0390 (494 aa).

The protein belongs to the UPF0371 family.

The sequence is that of UPF0371 protein SPT_0390 from Streptococcus pneumoniae (strain Taiwan19F-14).